We begin with the raw amino-acid sequence, 621 residues long: KIF-binding protein (621 aa).

Residue serine 178 is modified to Phosphoserine.

Belongs to the KIF-binding protein family. As to quaternary structure, interacts with KIF1B; positively regulates KIF1B microtubule motor activity. Interacts with STMN2.

Its subcellular location is the cytoplasm. It localises to the cytoskeleton. Functionally, activator of KIF1B plus-end-directed microtubule motor activity. Required for organization of axonal microtubules, and axonal outgrowth and maintenance during peripheral and central nervous system development. The polypeptide is KIF-binding protein (KIFBP) (Bos taurus (Bovine)).